We begin with the raw amino-acid sequence, 551 residues long: MADGWDAEKIFNTTVFGFTYDDLILMPGHIDFGVNDVDLSTRITRNLHVRTPIVSSPMDTVTEHRMAIGCALMGGMGVIHNNMETARQVAEVQKVKRYENGFILDPFVLRPSDSVADVYRIKEKYGYSSVPITDTGMLGGKLLGIVTSRDIDFLTDVHTPLSEVMTSDLVVGHEPVQLAEANELLRESKKGKLPIVNDNFELVALISRNDLKKNREFPLASKDSNKQLLVGAAVSTKPHDIERAKALQEAGADVLVVDSSQGDSIYQVDLVKRLKAAFPELQIIGGNVVTARQAKSLIDAGVDGLRIGMGSGSICTTQVVCAVGRAQATAVYHVCKYAREHGDVPCIADGGIQNSGHVMKALALGANAVMMGSMLAGTEEAPGEYYFHNGVRVKTYRGMGSLDAMRAGTRRTASPPARGLRSPEASPSTAASSGGASRASALSEASPSAKSEASRTSTSTGSAARYFAENQTIRVAQGVSGCVVDKGTVMQLIPYVIQGVKHGMQDIGARTLRDLHAQLVGGELRFDVRSGAAQREGDVHDLHSFERKLYA.

2 consecutive CBS domains span residues 102–163 and 165–221; these read FILD…PLSE and MTSD…PLAS. NAD(+)-binding positions include 258–260 and 308–310; these read DSS and GMG. K(+)-binding residues include Gly310 and Gly312. Ser313 contributes to the IMP binding site. Cys315 serves as a coordination point for K(+). Cys315 acts as the Thioimidate intermediate in catalysis. IMP is bound by residues 349–351, 372–373, and 396–400; these read DGG, GS, and YRGMG. Positions 407–462 are disordered; the sequence is AGTRRTASPPARGLRSPEASPSTAASSGGASRASALSEASPSAKSEASRTSTSTGS. Positions 422-462 are enriched in low complexity; sequence SPEASPSTAASSGGASRASALSEASPSAKSEASRTSTSTGS. Arg465 functions as the Proton acceptor in the catalytic mechanism. IMP is bound at residue Gln477. Glu536 and Gly537 together coordinate K(+).

It belongs to the IMPDH/GMPR family. In terms of assembly, homotetramer. K(+) serves as cofactor.

It is found in the cytoplasm. The catalysed reaction is IMP + NAD(+) + H2O = XMP + NADH + H(+). The protein operates within purine metabolism; XMP biosynthesis via de novo pathway; XMP from IMP: step 1/1. Mycophenolic acid (MPA) is a non-competitive inhibitor that prevents formation of the closed enzyme conformation by binding to the same site as the amobile flap. In contrast, mizoribine monophosphate (MZP) is a competitive inhibitor that induces the closed conformation. MPA is a potent inhibitor of mammalian IMPDHs but a poor inhibitor of the bacterial enzymes. MZP is a more potent inhibitor of bacterial IMPDH. Potently inhibited by MPA and adenine dinucleotide analogs such as thiazole-4-carboxamide adenine dinucleotide (TAD). Catalyzes the conversion of inosine 5'-phosphate (IMP) to xanthosine 5'-phosphate (XMP), the first committed and rate-limiting step in the de novo synthesis of guanine nucleotides, and therefore plays an important role in the regulation of cell growth. This chain is Inosine-5'-monophosphate dehydrogenase, found in Toxoplasma gondii.